The following is a 73-amino-acid chain: Alternative prion protein (73 aa).

A helical transmembrane segment spans residues 32 to 52 (WWWLGAASWWWLGAAPWWWLG).

In terms of tissue distribution, detected in brain homogenate, primary neurons, and peripheral blood mononuclear cells (at protein level).

It localises to the mitochondrion outer membrane. The protein is Alternative prion protein (PRNP) of Homo sapiens (Human).